The chain runs to 434 residues: MQVSVETTQGLERRLTISVPAEQIEKLVKDNVLREAKRARLPGFRPGKVPIGEINKRYGKAIRQDITGEVMQRNFIEAIVAEKLNPAGAPVFTPGSTEGDSFEFVATFEIYPEVVLTGLDSIAVEQPKAEVNDADVDVMIETLRKQHATFAPVERAAVADDKVKMNFIGSIDGEEFEGGKADDFELQLGSNRMIPGFETGIVGHKTGDEFEIEVTFPEDYHAENLKGKAAKFVITLTEVQAANLPEVNDEFASLFGIAEGGLDALKAEIRKNMTRELEQALKANVKEQVITGLLAANDIAIPKALVEGEVNVLRQQAMQRFGGQTENMPELPAELFTEQAERRVKIGLLLGEVIKTNELKAEDDRVNTLIESMASAYEDPSEVVSYYNSNKELMQNMRNVALEEQAVEALLKSSKVTVKDVAFEEFMNKATGRA.

Residues 160–245 (DDKVKMNFIG…LTEVQAANLP (86 aa)) enclose the PPIase FKBP-type domain.

This sequence belongs to the FKBP-type PPIase family. Tig subfamily.

The protein localises to the cytoplasm. It catalyses the reaction [protein]-peptidylproline (omega=180) = [protein]-peptidylproline (omega=0). Involved in protein export. Acts as a chaperone by maintaining the newly synthesized protein in an open conformation. Functions as a peptidyl-prolyl cis-trans isomerase. The sequence is that of Trigger factor from Shewanella frigidimarina (strain NCIMB 400).